Reading from the N-terminus, the 62-residue chain is Potassium channel toxin alpha-KTx Tx308 (62 aa).

The signal sequence occupies residues 1-18 (MQKLFIVLLLFCILRLDA). Disulfide bonds link cysteine 28/cysteine 46, cysteine 33/cysteine 59, and cysteine 37/cysteine 61.

The protein belongs to the short scorpion toxin superfamily. Potassium channel inhibitor family. Alpha-KTx 23 subfamily. In terms of tissue distribution, expressed by the venom gland.

The protein resides in the secreted. In terms of biological role, may block potassium channels. The sequence is that of Potassium channel toxin alpha-KTx Tx308 from Buthus israelis (Israeli scorpion).